We begin with the raw amino-acid sequence, 140 residues long: ATP synthase epsilon chain, chloroplastic (140 aa).

Belongs to the ATPase epsilon chain family. As to quaternary structure, F-type ATPases have 2 components, CF(1) - the catalytic core - and CF(0) - the membrane proton channel. CF(1) has five subunits: alpha(3), beta(3), gamma(1), delta(1), epsilon(1). CF(0) has three main subunits: a, b and c.

It localises to the plastid. The protein localises to the chloroplast thylakoid membrane. Its function is as follows. Produces ATP from ADP in the presence of a proton gradient across the membrane. In Panax ginseng (Korean ginseng), this protein is ATP synthase epsilon chain, chloroplastic.